The primary structure comprises 240 residues: Zein-alpha 19C2 (240 aa).

The N-terminal stretch at 1–21 is a signal peptide; that stretch reads MATKIFSLLMLLALSTCVANA.

It belongs to the zein family. Interacts with OP10 (via N-terminus).

Functionally, zeins are major seed storage proteins. In Zea mays (Maize), this protein is Zein-alpha 19C2.